Here is a 58-residue protein sequence, read N- to C-terminus: Small ribosomal subunit protein bS21 (58 aa).

Residues 36–58 form a disordered region; that stretch reads RHHETPVEKYKRKLQQRRRSRRR. The segment covering 45–58 has biased composition (basic residues); it reads YKRKLQQRRRSRRR.

Belongs to the bacterial ribosomal protein bS21 family.

This is Small ribosomal subunit protein bS21 from Prochlorococcus marinus (strain NATL1A).